The chain runs to 724 residues: Catalase-peroxidase (724 aa).

Residues 1–20 form a disordered region; sequence MDENKTKPAGKCPVMHGGNT. The tryptophyl-tyrosyl-methioninium (Trp-Tyr) (with M-251) cross-link spans 98-225; the sequence is WHSAGTYRTA…LAAVQMGLIY (128 aa). His-99 functions as the Proton acceptor in the catalytic mechanism. The segment at residues 225–251 is a cross-link (tryptophyl-tyrosyl-methioninium (Tyr-Met) (with W-98)); sequence YVNPEGVDGNPDPLRTAQDMRVTFSRM. His-266 serves as a coordination point for heme b.

This sequence belongs to the peroxidase family. Peroxidase/catalase subfamily. In terms of assembly, homodimer or homotetramer. It depends on heme b as a cofactor. Post-translationally, formation of the three residue Trp-Tyr-Met cross-link is important for the catalase, but not the peroxidase activity of the enzyme.

It carries out the reaction H2O2 + AH2 = A + 2 H2O. The enzyme catalyses 2 H2O2 = O2 + 2 H2O. Functionally, bifunctional enzyme with both catalase and broad-spectrum peroxidase activity. The polypeptide is Catalase-peroxidase (Pectobacterium carotovorum subsp. carotovorum (strain PC1)).